We begin with the raw amino-acid sequence, 444 residues long: Methylenetetrahydrofolate--tRNA-(uracil-5-)-methyltransferase TrmFO (444 aa).

Gly-10 to Gly-15 is a binding site for FAD.

Belongs to the MnmG family. TrmFO subfamily. FAD is required as a cofactor.

Its subcellular location is the cytoplasm. It catalyses the reaction uridine(54) in tRNA + (6R)-5,10-methylene-5,6,7,8-tetrahydrofolate + NADH + H(+) = 5-methyluridine(54) in tRNA + (6S)-5,6,7,8-tetrahydrofolate + NAD(+). It carries out the reaction uridine(54) in tRNA + (6R)-5,10-methylene-5,6,7,8-tetrahydrofolate + NADPH + H(+) = 5-methyluridine(54) in tRNA + (6S)-5,6,7,8-tetrahydrofolate + NADP(+). Its function is as follows. Catalyzes the folate-dependent formation of 5-methyl-uridine at position 54 (M-5-U54) in all tRNAs. The chain is Methylenetetrahydrofolate--tRNA-(uracil-5-)-methyltransferase TrmFO from Streptococcus pneumoniae (strain ATCC 700669 / Spain 23F-1).